The primary structure comprises 449 residues: Putative recombination initiation defects 3 (449 aa).

Residues leucine 21 to phenylalanine 56 are disordered. The span at glutamine 28–glutamine 50 shows a compositional bias: low complexity. The Nuclear localization signal signature appears at arginine 437–lysine 441.

Interacts with PRD1; this interaction facilitates a binding to DFO.

It localises to the nucleus. Involved in DNA cleavage that forms the double-strand breaks (DSB) that initiate meiotic recombination. In Arabidopsis thaliana (Mouse-ear cress), this protein is Putative recombination initiation defects 3.